Reading from the N-terminus, the 596-residue chain is Elongation factor 4 (596 aa).

One can recognise a tr-type G domain in the interval 2–184 (KHIRNFSIIA…VIVDQIPPPE (183 aa)). Residues 14-19 (DHGKST) and 131-134 (NKID) each bind GTP.

It belongs to the TRAFAC class translation factor GTPase superfamily. Classic translation factor GTPase family. LepA subfamily.

It localises to the cell inner membrane. The catalysed reaction is GTP + H2O = GDP + phosphate + H(+). Its function is as follows. Required for accurate and efficient protein synthesis under certain stress conditions. May act as a fidelity factor of the translation reaction, by catalyzing a one-codon backward translocation of tRNAs on improperly translocated ribosomes. Back-translocation proceeds from a post-translocation (POST) complex to a pre-translocation (PRE) complex, thus giving elongation factor G a second chance to translocate the tRNAs correctly. Binds to ribosomes in a GTP-dependent manner. The chain is Elongation factor 4 from Shewanella sp. (strain ANA-3).